The sequence spans 289 residues: Orotidine 5'-phosphate decarboxylase (289 aa).

The active-site Proton donor is the Lys-97.

The protein belongs to the OMP decarboxylase family. Type 2 subfamily.

It carries out the reaction orotidine 5'-phosphate + H(+) = UMP + CO2. It functions in the pathway pyrimidine metabolism; UMP biosynthesis via de novo pathway; UMP from orotate: step 2/2. The protein is Orotidine 5'-phosphate decarboxylase of Petrotoga mobilis (strain DSM 10674 / SJ95).